The chain runs to 670 residues: Histone-lysine N-methyltransferase, H3 lysine-9 specific SUVH1 (670 aa).

Residues 53-140 (YPFSSSQANQ…RPISRPENMN (88 aa)) are disordered. The span at 68-79 (NQAQYPPQHQQP) shows a compositional bias: low complexity. Basic residues predominate over residues 123–133 (VKRRIPKKRPI). The 147-residue stretch at 211 to 357 (GIVPGVEIGD…HNTFKYKLVR (147 aa)) folds into the YDG domain. Residues 432–492 (FGCDCANLCK…TCKNKVTQMG (61 aa)) form the Pre-SET domain. Zn(2+) contacts are provided by Cys434, Cys436, Cys440, Cys447, Cys449, Cys475, Cys479, Cys481, and Cys484. Residues 495 to 639 (VRLEVFKTAN…PMTELTYDYG (145 aa)) enclose the SET domain. S-adenosyl-L-methionine contacts are provided by residues 505–507 (RGW), Asp541, Tyr543, Arg593, and 596–597 (NH). Residues Cys599, Cys658, Cys660, and Cys665 each contribute to the Zn(2+) site. The Post-SET domain maps to 654 to 670 (GKRKCFCGSAYCRGSFG).

It belongs to the class V-like SAM-binding methyltransferase superfamily. Histone-lysine methyltransferase family. Suvar3-9 subfamily. As to expression, expressed in leaves stems and flowers.

Its subcellular location is the nucleus. The protein localises to the chromosome. It is found in the centromere. It catalyses the reaction L-lysyl(9)-[histone H3] + 2 S-adenosyl-L-methionine = N(6),N(6)-dimethyl-L-lysyl(9)-[histone H3] + 2 S-adenosyl-L-homocysteine + 2 H(+). Its function is as follows. Histone methyltransferase. Methylates 'Lys-9' of histone H3. H3 'Lys-9' methylation represents a specific tag for epigenetic transcriptional repression. The chain is Histone-lysine N-methyltransferase, H3 lysine-9 specific SUVH1 (SUVH1) from Arabidopsis thaliana (Mouse-ear cress).